We begin with the raw amino-acid sequence, 476 residues long: Riboflavin transporter rft-2 (476 aa).

The helical transmembrane segment at methionine 1 to glycine 21 threads the bilayer. At threonine 22 to asparagine 41 the chain is on the cytoplasmic side. A helical membrane pass occupies residues leucine 42–isoleucine 62. Residues leucine 63 to alanine 75 are Extracellular-facing. A helical membrane pass occupies residues proline 76–tryptophan 96. The Cytoplasmic segment spans residues serine 97 to serine 113. A helical membrane pass occupies residues leucine 114 to alanine 134. The Extracellular segment spans residues glutamine 135–tyrosine 140. Residues leucine 141–alanine 161 form a helical membrane-spanning segment. The Cytoplasmic portion of the chain corresponds to glutamine 162–serine 185. A helical transmembrane segment spans residues isoleucine 186 to tyrosine 206. Topologically, residues arginine 207 to lysine 306 are extracellular. The disordered stretch occupies residues alanine 215–isoleucine 249. Positions asparagine 218–leucine 232 are enriched in basic and acidic residues. Asparagine 233 is a glycosylation site (N-linked (GlcNAc...) asparagine). A helical transmembrane segment spans residues phenylalanine 307 to serine 327. Residues valine 328–histidine 342 are Cytoplasmic-facing. The chain crosses the membrane as a helical span at residues phenylalanine 343–serine 363. Over valine 364–serine 366 the chain is Extracellular. Residues isoleucine 367–leucine 387 form a helical membrane-spanning segment. Residues alanine 388–asparagine 393 are Cytoplasmic-facing. A helical transmembrane segment spans residues leucine 394–alanine 414. The Extracellular segment spans residues glycine 415 to arginine 437. Residues leucine 438–proline 458 form a helical membrane-spanning segment. The Cytoplasmic segment spans residues leucine 459–serine 476.

It belongs to the riboflavin transporter family. Expressed in intestine and pharynx.

The protein localises to the cell membrane. It catalyses the reaction riboflavin(in) = riboflavin(out). Functionally, riboflavin transporter. The sequence is that of Riboflavin transporter rft-2 from Caenorhabditis elegans.